The primary structure comprises 113 residues: Cytochrome c (113 aa).

The residue at position 1 (Ala1) is an N-acetylalanine. 3 residues coordinate heme c: Cys22, Cys25, and His26. Lys80 is modified (N6,N6,N6-trimethyllysine). Met88 is a binding site for heme c. Lys94 carries the N6,N6,N6-trimethyllysine modification.

This sequence belongs to the cytochrome c family. Post-translationally, binds 1 heme c group covalently per subunit.

The protein resides in the mitochondrion intermembrane space. In terms of biological role, electron carrier protein. The oxidized form of the cytochrome c heme group can accept an electron from the heme group of the cytochrome c1 subunit of cytochrome reductase. Cytochrome c then transfers this electron to the cytochrome oxidase complex, the final protein carrier in the mitochondrial electron-transport chain. This Ginkgo biloba (Ginkgo) protein is Cytochrome c.